A 140-amino-acid chain; its full sequence is Organic hydroperoxide resistance protein-like (140 aa).

Belongs to the OsmC/Ohr family.

This Mycoplasma pneumoniae (strain ATCC 29342 / M129 / Subtype 1) (Mycoplasmoides pneumoniae) protein is Organic hydroperoxide resistance protein-like.